A 717-amino-acid chain; its full sequence is Transport/processing ATP-binding protein ComA (717 aa).

Residues 11–138 (QVDQMDCGVA…EEWTGVTLFM (128 aa)) form the Peptidase C39 domain. Cysteine 17 is an active-site residue. The next 6 helical transmembrane spans lie at 166–186 (GLIA…IVGS), 205–225 (LGII…LSYA), 237–257 (LSID…MSFF), 282–302 (TILS…VLFS), 306–326 (NLFF…FAFM), and 397–417 (VAHL…VMDG). The ABC transmembrane type-1 domain occupies 168–450 (IANIVLATLL…IINLQTKLQT (283 aa)). One can recognise an ABC transporter domain in the interval 484–717 (MTFKQVHYKY…GGFYAHLVNS (234 aa)). ATP is bound at residue 517-524 (GISGSGKT).

This sequence belongs to the ABC transporter superfamily. Competence factor exporter (TC 3.A.1.112.1) family.

The protein resides in the cell membrane. Required for induction of competence. Seems to transport the competence-stimulating peptide (CSP). This is Transport/processing ATP-binding protein ComA (comA) from Streptococcus pneumoniae serotype 4 (strain ATCC BAA-334 / TIGR4).